The primary structure comprises 388 residues: Homoserine O-acetyltransferase (388 aa).

The AB hydrolase-1 domain occupies 55–354 (PIVLIEHALT…PTGHDGFLIE (300 aa)). The Nucleophile role is filled by Ser-150. Position 220 (Arg-220) interacts with substrate. Residues Asp-318 and His-348 contribute to the active site. Asp-349 is a binding site for substrate.

Belongs to the AB hydrolase superfamily. MetX family. As to quaternary structure, homodimer.

It localises to the cytoplasm. It catalyses the reaction L-homoserine + acetyl-CoA = O-acetyl-L-homoserine + CoA. Its pathway is amino-acid biosynthesis; L-methionine biosynthesis via de novo pathway; O-acetyl-L-homoserine from L-homoserine: step 1/1. Its function is as follows. Transfers an acetyl group from acetyl-CoA to L-homoserine, forming acetyl-L-homoserine. The polypeptide is Homoserine O-acetyltransferase (Corynebacterium urealyticum (strain ATCC 43042 / DSM 7109)).